Reading from the N-terminus, the 86-residue chain is Small ribosomal subunit protein bS18 (86 aa).

This sequence belongs to the bacterial ribosomal protein bS18 family. Part of the 30S ribosomal subunit. Forms a tight heterodimer with protein bS6.

In terms of biological role, binds as a heterodimer with protein bS6 to the central domain of the 16S rRNA, where it helps stabilize the platform of the 30S subunit. The polypeptide is Small ribosomal subunit protein bS18 (Herpetosiphon aurantiacus (strain ATCC 23779 / DSM 785 / 114-95)).